The sequence spans 628 residues: Chaperone protein DnaK (628 aa).

Phosphothreonine; by autocatalysis is present on threonine 197. The disordered stretch occupies residues 597–628 (EQMYKGEQGAQGGAADTSKKKSDDDVIDAEIE).

Belongs to the heat shock protein 70 family.

In terms of biological role, acts as a chaperone. This chain is Chaperone protein DnaK, found in Sulfurimonas denitrificans (strain ATCC 33889 / DSM 1251) (Thiomicrospira denitrificans (strain ATCC 33889 / DSM 1251)).